The chain runs to 152 residues: Endoribonuclease YbeY (152 aa).

3 residues coordinate Zn(2+): histidine 111, histidine 115, and histidine 121.

The protein belongs to the endoribonuclease YbeY family. Requires Zn(2+) as cofactor.

It localises to the cytoplasm. Single strand-specific metallo-endoribonuclease involved in late-stage 70S ribosome quality control and in maturation of the 3' terminus of the 16S rRNA. The polypeptide is Endoribonuclease YbeY (Pseudomonas fluorescens (strain ATCC BAA-477 / NRRL B-23932 / Pf-5)).